Consider the following 535-residue polypeptide: Butyrophilin-like protein 9 (535 aa).

Residues 1–34 (MVDLSVSPDSLKPVSLTSSLVFLMHLLLLQPGEP) form the signal peptide. The Extracellular segment spans residues 35 to 256 (SSEVKVLGPE…VFVPGASAWK (222 aa)). Residues 54 to 135 (EVEFPCHLWP…SDKGTYGCRF (82 aa)) enclose the Ig-like V-type domain. Cys59 and Cys133 are disulfide-bonded. Asn102, Asn139, and Asn224 each carry an N-linked (GlcNAc...) asparagine glycan. A helical transmembrane segment spans residues 257–277 (SAFVATLPLLLVLAALALGVL). Residues 276-315 (VLRKQRRSREKLRKQAEKRQEKLTAELEKLQTELDWRRAE) are a coiled coil. The Cytoplasmic portion of the chain corresponds to 278-535 (RKQRRSREKL…EPADPALDWW (258 aa)). One can recognise a B30.2/SPRY domain in the interval 310 to 509 (DWRRAEGQAE…LTICPLPVRG (200 aa)). The tract at residues 340 to 367 (SLEVSEDGKSVSSRGAPPGPAPGHPQRF) is disordered.

Belongs to the immunoglobulin superfamily. BTN/MOG family.

It localises to the membrane. The protein is Butyrophilin-like protein 9 (BTNL9) of Homo sapiens (Human).